The following is a 338-amino-acid chain: DNA-directed RNA polymerase subunit alpha (338 aa).

Positions 1–225 (MLISQRPTLT…ELFGLARELN (225 aa)) are alpha N-terminal domain (alpha-NTD). The interval 242–338 (YIAAYGMPIE…YIDTDPEETE (97 aa)) is alpha C-terminal domain (alpha-CTD). A disordered region spans residues 314–338 (FDPTQLDGYDAATGDYIDTDPEETE).

Belongs to the RNA polymerase alpha chain family. Homodimer. The RNAP catalytic core consists of 2 alpha, 1 beta, 1 beta' and 1 omega subunit. When a sigma factor is associated with the core the holoenzyme is formed, which can initiate transcription.

It carries out the reaction RNA(n) + a ribonucleoside 5'-triphosphate = RNA(n+1) + diphosphate. In terms of biological role, DNA-dependent RNA polymerase catalyzes the transcription of DNA into RNA using the four ribonucleoside triphosphates as substrates. The chain is DNA-directed RNA polymerase subunit alpha from Corynebacterium diphtheriae (strain ATCC 700971 / NCTC 13129 / Biotype gravis).